Here is a 134-residue protein sequence, read N- to C-terminus: ATP synthase epsilon chain, chloroplastic (134 aa).

Belongs to the ATPase epsilon chain family. In terms of assembly, F-type ATPases have 2 components, CF(1) - the catalytic core - and CF(0) - the membrane proton channel. CF(1) has five subunits: alpha(3), beta(3), gamma(1), delta(1), epsilon(1). CF(0) has three main subunits: a, b and c.

The protein resides in the plastid. It is found in the chloroplast thylakoid membrane. Its function is as follows. Produces ATP from ADP in the presence of a proton gradient across the membrane. In Liriodendron tulipifera (Tuliptree), this protein is ATP synthase epsilon chain, chloroplastic.